A 234-amino-acid chain; its full sequence is Sugar fermentation stimulation protein A (234 aa).

The H-T-H motif DNA-binding region spans 201–220 (LLSEAQNKGVEVLAYKAELS).

This sequence belongs to the SfsA family.

Its function is as follows. Binds to DNA non-specifically. Could be a regulatory factor involved in maltose metabolism. In Salmonella agona (strain SL483), this protein is Sugar fermentation stimulation protein A.